We begin with the raw amino-acid sequence, 58 residues long: UPF0337 protein SAV_738 (58 aa).

The tract at residues Met-1–Lys-58 is disordered. Basic and acidic residues predominate over residues Leu-31–Lys-58.

The protein belongs to the UPF0337 (CsbD) family.

The sequence is that of UPF0337 protein SAV_738 from Streptomyces avermitilis (strain ATCC 31267 / DSM 46492 / JCM 5070 / NBRC 14893 / NCIMB 12804 / NRRL 8165 / MA-4680).